We begin with the raw amino-acid sequence, 574 residues long: 5'-nucleotidase (574 aa).

A signal peptide spans 1–26 (MCPRAARAPATLLLALGAVLWPAAGA). Zn(2+)-binding residues include aspartate 36 and histidine 38. A disulfide bridge connects residues cysteine 51 and cysteine 57. Residue asparagine 53 is glycosylated (N-linked (GlcNAc...) asparagine). Positions 85, 117, 220, and 243 each coordinate Zn(2+). Residues asparagine 311 and asparagine 333 are each glycosylated (N-linked (GlcNAc...) asparagine). 2 disulfide bridges follow: cysteine 353–cysteine 358 and cysteine 365–cysteine 387. An AMP-binding site is contributed by arginine 354. Arginine 354 is an IMP binding site. 2 residues coordinate AMP: asparagine 390 and arginine 395. 2 residues coordinate IMP: asparagine 390 and arginine 395. N-linked (GlcNAc...) asparagine glycosylation occurs at asparagine 403. Position 417 (phenylalanine 417) interacts with AMP. Phenylalanine 417 lines the IMP pocket. An intrachain disulfide couples cysteine 476 to cysteine 479. AMP is bound by residues phenylalanine 500 and aspartate 506. IMP contacts are provided by phenylalanine 500 and aspartate 506. Serine 549 carries GPI-anchor amidated serine lipidation. The propeptide at 550 to 574 (TGSHCHGSFSLIFLSLWAVIFVLYQ) is removed in mature form.

This sequence belongs to the 5'-nucleotidase family. Homodimer. Requires Zn(2+) as cofactor.

The protein resides in the cell membrane. The enzyme catalyses a ribonucleoside 5'-phosphate + H2O = a ribonucleoside + phosphate. It catalyses the reaction a 2'-deoxyribonucleoside 5'-phosphate + H2O = a 2'-deoxyribonucleoside + phosphate. The catalysed reaction is dTMP + H2O = thymidine + phosphate. It carries out the reaction CMP + H2O = cytidine + phosphate. The enzyme catalyses IMP + H2O = inosine + phosphate. It catalyses the reaction AMP + H2O = adenosine + phosphate. The catalysed reaction is GMP + H2O = guanosine + phosphate. It carries out the reaction UMP + H2O = uridine + phosphate. The enzyme catalyses dAMP + H2O = 2'-deoxyadenosine + phosphate. It catalyses the reaction dCMP + H2O = 2'-deoxycytidine + phosphate. Its activity is regulated as follows. Inhibited by adenosine 5'-(alpha,beta-methylene)-diphosphate (AMPCP). Catalyzes the hydrolysis of nucleotide monophosphates, releasing inorganic phosphate and the corresponding nucleoside, with AMP being the preferred substrate. Shows a preference for ribonucleotide monophosphates over their equivalent deoxyribose forms. Other substrates include IMP, UMP, GMP, CMP, dAMP, dCMP, dTMP, NAD and NMN. This chain is 5'-nucleotidase (NT5E), found in Homo sapiens (Human).